The following is a 198-amino-acid chain: Glycerol-3-phosphate acyltransferase (198 aa).

5 helical membrane-spanning segments follow: residues 10–30 (LIPILFASYLIGSIPFSWILV), 57–77 (GISFLVLLLDIFKSVLVILIL), 86–106 (IMYLTGFTVVLGHIFPVWFLF), 118–138 (VVLSINIKIFFLFIITWAVVF), and 160–180 (AVTENFNSSIFYIAMSIIVLI).

The protein belongs to the PlsY family. In terms of assembly, probably interacts with PlsX.

Its subcellular location is the cell inner membrane. It catalyses the reaction an acyl phosphate + sn-glycerol 3-phosphate = a 1-acyl-sn-glycero-3-phosphate + phosphate. Its pathway is lipid metabolism; phospholipid metabolism. Functionally, catalyzes the transfer of an acyl group from acyl-phosphate (acyl-PO(4)) to glycerol-3-phosphate (G3P) to form lysophosphatidic acid (LPA). This enzyme utilizes acyl-phosphate as fatty acyl donor, but not acyl-CoA or acyl-ACP. The polypeptide is Glycerol-3-phosphate acyltransferase (Anaplasma marginale (strain St. Maries)).